The following is a 107-amino-acid chain: Universal stress protein B homolog (107 aa).

The next 2 helical transmembrane spans lie at 6–25 (TILF…YVTA) and 89–106 (LFIL…VAFM).

Belongs to the universal stress protein B family.

It is found in the cell inner membrane. The chain is Universal stress protein B homolog from Vibrio cholerae serotype O1 (strain ATCC 39541 / Classical Ogawa 395 / O395).